Consider the following 250-residue polypeptide: Ribonucleotide monophosphatase NagD (250 aa).

The Mg(2+) site is built by Asp-9 and Asp-11. The active site involves Asp-11. Substrate contacts are provided by residues Asp-11, 42–43 (TN), and Lys-176. Asp-201 lines the Mg(2+) pocket. Residue 202-205 (NLRT) coordinates substrate.

The protein belongs to the HAD-like hydrolase superfamily. NagD family. Monomer. Requires Mg(2+) as cofactor. The cofactor is Mn(2+). It depends on Co(2+) as a cofactor. Zn(2+) is required as a cofactor.

It carries out the reaction a ribonucleoside 5'-phosphate + H2O = a ribonucleoside + phosphate. Catalyzes the dephosphorylation of an unusually broad range of substrate including deoxyribo- and ribonucleoside tri-, di-, and monophosphates, as well as polyphosphate and glucose-1-P (Glu1P). The protein is Ribonucleotide monophosphatase NagD (nagD) of Escherichia coli O157:H7.